Reading from the N-terminus, the 551-residue chain is Interleukin-2 receptor subunit beta (551 aa).

An N-terminal signal peptide occupies residues 1 to 26 (MAAPALSWRLPLLILLLPLATPWASA). Residues 27–240 (TVNGTSQFTC…TKPASLGKDT (214 aa)) lie on the Extracellular side of the membrane. N-linked (GlcNAc...) asparagine glycans are attached at residues N29, N43, and N71. The cysteines at positions 36 and 46 are disulfide-linked. C74 and C86 form a disulfide bridge. The Fibronectin type-III domain maps to 134 to 234 (APISLQVVHV…QPLAFRTKPA (101 aa)). N-linked (GlcNAc...) asparagine glycosylation is present at N149. The WSXWS motif signature appears at 220-224 (WSPWS). Residues 241 to 265 (IPWLGHLLVGLSGAFGFIILVYLLI) traverse the membrane as a helical segment. Residues 266–551 (NCRNTGPWLK…LQGQDPTHLV (286 aa)) lie on the Cytoplasmic side of the membrane. The Box 1 motif signature appears at 278-286 (LKCHTPDPS). Disordered regions lie at residues 393–412 (DEGVAGAPTGSSPQPLQPLS) and 433–476 (SLLG…GPPT).

The protein belongs to the type I cytokine receptor family. Type 4 subfamily. As to quaternary structure, non-covalent dimer of an alpha and a beta subunit. IL2R exists in 3 different forms: a high affinity dimer, an intermediate affinity monomer (beta subunit), and a low affinity monomer (alpha subunit). The high and intermediate affinity forms also associate with a gamma subunit. Interacts with SHB upon interleukin stimulation.

It is found in the cell membrane. The protein localises to the cell surface. Functionally, receptor for interleukin-2. This beta subunit is involved in receptor mediated endocytosis and transduces the mitogenic signals of IL2. Probably in association with IL15RA, involved in the stimulation of neutrophil phagocytosis by IL15. The chain is Interleukin-2 receptor subunit beta (IL2RB) from Pan troglodytes (Chimpanzee).